We begin with the raw amino-acid sequence, 176 residues long: Crossover junction endodeoxyribonuclease RuvC (176 aa).

Active-site residues include Asp10, Glu69, and Asp141. Mg(2+) contacts are provided by Asp10, Glu69, and Asp141.

It belongs to the RuvC family. In terms of assembly, homodimer which binds Holliday junction (HJ) DNA. The HJ becomes 2-fold symmetrical on binding to RuvC with unstacked arms; it has a different conformation from HJ DNA in complex with RuvA. In the full resolvosome a probable DNA-RuvA(4)-RuvB(12)-RuvC(2) complex forms which resolves the HJ. Requires Mg(2+) as cofactor.

The protein localises to the cytoplasm. The catalysed reaction is Endonucleolytic cleavage at a junction such as a reciprocal single-stranded crossover between two homologous DNA duplexes (Holliday junction).. In terms of biological role, the RuvA-RuvB-RuvC complex processes Holliday junction (HJ) DNA during genetic recombination and DNA repair. Endonuclease that resolves HJ intermediates. Cleaves cruciform DNA by making single-stranded nicks across the HJ at symmetrical positions within the homologous arms, yielding a 5'-phosphate and a 3'-hydroxyl group; requires a central core of homology in the junction. The consensus cleavage sequence is 5'-(A/T)TT(C/G)-3'. Cleavage occurs on the 3'-side of the TT dinucleotide at the point of strand exchange. HJ branch migration catalyzed by RuvA-RuvB allows RuvC to scan DNA until it finds its consensus sequence, where it cleaves and resolves the cruciform DNA. The sequence is that of Crossover junction endodeoxyribonuclease RuvC from Dichelobacter nodosus (strain VCS1703A).